A 43-amino-acid polypeptide reads, in one-letter code: Potassium channel toxin gamma-KTx 4.4 (43 aa).

Cystine bridges form between cysteine 5-cysteine 23, cysteine 11-cysteine 34, cysteine 20-cysteine 39, and cysteine 24-cysteine 41.

The protein belongs to the ergtoxin family. Gamma-KTx 4 subfamily. As to expression, expressed by the venom gland.

It is found in the secreted. Its function is as follows. Reversibly blocks Kv11/ERG potassium channels. The polypeptide is Potassium channel toxin gamma-KTx 4.4 (Centruroides exilicauda (Bark scorpion)).